A 222-amino-acid chain; its full sequence is MPSLSKEAALVHEALVARGLETPLRPPVNELDNETRKRLIAGHMTEIMQLLNLDLSDDSLMETPQRIAKMYVDEIFSGLDYANFPKITVIENKMNVDEMVTVRDITLTSTCEHHFVTIDGKATVAYIPKDTVIGLSKINRIVQFFAQRPQVQERLTQQILTALQTLLGTNNVAVSIDAVHYCVKARGVRDATSATTTTSLGGLFKSSQNTRQEFLRAVRHHN.

Zn(2+) is bound by residues cysteine 111, histidine 114, and cysteine 182.

It belongs to the GTP cyclohydrolase I family. In terms of assembly, toroid-shaped homodecamer, composed of two pentamers of five dimers.

The enzyme catalyses GTP + H2O = 7,8-dihydroneopterin 3'-triphosphate + formate + H(+). Its pathway is cofactor biosynthesis; 7,8-dihydroneopterin triphosphate biosynthesis; 7,8-dihydroneopterin triphosphate from GTP: step 1/1. This chain is GTP cyclohydrolase 1, found in Enterobacter sp. (strain 638).